A 99-amino-acid polypeptide reads, in one-letter code: Large ribosomal subunit protein uL23 (99 aa).

The protein belongs to the universal ribosomal protein uL23 family. Part of the 50S ribosomal subunit. Contacts protein L29, and trigger factor when it is bound to the ribosome.

One of the early assembly proteins it binds 23S rRNA. One of the proteins that surrounds the polypeptide exit tunnel on the outside of the ribosome. Forms the main docking site for trigger factor binding to the ribosome. This is Large ribosomal subunit protein uL23 from Francisella tularensis subsp. tularensis (strain SCHU S4 / Schu 4).